Reading from the N-terminus, the 235-residue chain is Rab-like protein 3 (235 aa).

The interval 1 to 235 (MASLDRVKVL…GGNFKSLHYD (235 aa)) is small GTPase-like. GTP contacts are provided by residues 16–21 (GVGKSS), 148–150 (KLD), and 179–180 (DC).

The protein belongs to the small GTPase superfamily. Rab family. In terms of assembly, homodimer.

Required for KRAS signaling regulation and modulation of cell proliferation. Regulator of KRAS prenylation, and probably prenylation of other small GTPases. Required for lymphocyte development and function. Not required for myeloid cell development. The sequence is that of Rab-like protein 3 (rabl3) from Xenopus tropicalis (Western clawed frog).